The sequence spans 323 residues: tRNA dimethylallyltransferase (323 aa).

Gly12 to Thr19 is an ATP binding site. Thr14–Thr19 serves as a coordination point for substrate. 2 interaction with substrate tRNA regions span residues Asp37–Leu40 and Gln161–Arg165.

It belongs to the IPP transferase family. In terms of assembly, monomer. It depends on Mg(2+) as a cofactor.

The catalysed reaction is adenosine(37) in tRNA + dimethylallyl diphosphate = N(6)-dimethylallyladenosine(37) in tRNA + diphosphate. Catalyzes the transfer of a dimethylallyl group onto the adenine at position 37 in tRNAs that read codons beginning with uridine, leading to the formation of N6-(dimethylallyl)adenosine (i(6)A). The sequence is that of tRNA dimethylallyltransferase from Pseudomonas savastanoi pv. phaseolicola (strain 1448A / Race 6) (Pseudomonas syringae pv. phaseolicola (strain 1448A / Race 6)).